Reading from the N-terminus, the 870-residue chain is DNA topoisomerase 1 (870 aa).

One can recognise a Toprim domain in the interval 1 to 128 (MKSPRFRHSQ…RVYKSSFEAA (128 aa)). Residues 143-578 (YDGLAYSAKA…QTNAFVQKIT (436 aa)) form the Topo IA-type catalytic domain. Positions 180 to 185 (SSGRVQ) are interaction with DNA. Catalysis depends on Tyr-299, which acts as the O-(5'-phospho-DNA)-tyrosine intermediate. 3 C4-type zinc fingers span residues 603–627 (CQCPCGNGIILDRGKFFGCSNHPNC), 693–717 (CPKCQKGKILNRKTFFGCSEYQNGC), and 784–807 (CPLCQSRVIIGKTNYLCEQYKRGC).

This sequence belongs to the type IA topoisomerase family. Monomer.

It carries out the reaction ATP-independent breakage of single-stranded DNA, followed by passage and rejoining.. Its function is as follows. Releases the supercoiling and torsional tension of DNA, which is introduced during the DNA replication and transcription, by transiently cleaving and rejoining one strand of the DNA duplex. Introduces a single-strand break via transesterification at a target site in duplex DNA. The scissile phosphodiester is attacked by the catalytic tyrosine of the enzyme, resulting in the formation of a DNA-(5'-phosphotyrosyl)-enzyme intermediate and the expulsion of a 3'-OH DNA strand. The free DNA strand then undergoes passage around the unbroken strand, thus removing DNA supercoils. Finally, in the religation step, the DNA 3'-OH attacks the covalent intermediate to expel the active-site tyrosine and restore the DNA phosphodiester backbone. In Bacillus anthracis, this protein is DNA topoisomerase 1 (topX).